Consider the following 242-residue polypeptide: RNA transcription, translation and transport factor protein (242 aa).

Belongs to the RTRAF family. In terms of assembly, homodimer. Component of a tRNA-splicing ligase complex.

The protein localises to the nucleus. The protein resides in the cytoplasm. It is found in the cytosol. Its subcellular location is the perinuclear region. It localises to the cytoskeleton. The protein localises to the microtubule organizing center. The protein resides in the centrosome. In terms of biological role, RNA-binding protein involved in modulation of mRNA transcription by Polymerase II. Component of the tRNA-splicing ligase complex. This Danio rerio (Zebrafish) protein is RNA transcription, translation and transport factor protein.